A 633-amino-acid chain; its full sequence is Rab11 family-interacting protein 4 (633 aa).

EF-hand domains are found at residues 17–52 (LFLQ…FAQG) and 50–85 (AQGD…MKGC). The Ca(2+) site is built by D30, D32, D34, D63, N65, R69, and D74. Disordered stretches follow at residues 152–182 (SDLD…LGSL) and 218–257 (GEGE…QTPR). Polar residues predominate over residues 238 to 254 (TNALSDLGSSVPSSAGQ). Positions 410 to 613 (AREKGTEIVL…EEINYRLRQY (204 aa)) form a coiled coil. Residues 570–632 (EAKSLFSTQT…DHNPSILEIK (63 aa)) enclose the FIP-RBD domain.

As to quaternary structure, homodimer. Forms a complex with Rab11 (rab11a or rab11b) and arf6.

It localises to the recycling endosome membrane. The protein resides in the cleavage furrow. Its subcellular location is the midbody. It is found in the cytoplasmic vesicle. Functionally, acts as a regulator of endocytic traffic by participating in membrane delivery. Required for the abscission step in cytokinesis, possibly by acting as an 'address tag' delivering recycling endosome membranes to the cleavage furrow during late cytokinesis. This Xenopus tropicalis (Western clawed frog) protein is Rab11 family-interacting protein 4 (rab11fip4).